The sequence spans 341 residues: Protein-glutamate methylesterase/protein-glutamine glutaminase 2 (341 aa).

The Response regulatory domain occupies 11–126 (RVLVADDSEL…DLGEYGRLIR (116 aa)). 4-aspartylphosphate is present on aspartate 62. A CheB-type methylesterase domain is found at 152–341 (PARAARVEVV…IPRALRELTR (190 aa)). Catalysis depends on residues serine 166, histidine 193, and aspartate 285.

The protein belongs to the CheB family. Phosphorylated by CheA. Phosphorylation of the N-terminal regulatory domain activates the methylesterase activity.

The protein localises to the cytoplasm. The catalysed reaction is [protein]-L-glutamate 5-O-methyl ester + H2O = L-glutamyl-[protein] + methanol + H(+). The enzyme catalyses L-glutaminyl-[protein] + H2O = L-glutamyl-[protein] + NH4(+). Its function is as follows. Involved in chemotaxis. Part of a chemotaxis signal transduction system that modulates chemotaxis in response to various stimuli. Catalyzes the demethylation of specific methylglutamate residues introduced into the chemoreceptors (methyl-accepting chemotaxis proteins or MCP) by CheR. Also mediates the irreversible deamidation of specific glutamine residues to glutamic acid. This is Protein-glutamate methylesterase/protein-glutamine glutaminase 2 from Anaeromyxobacter dehalogenans (strain 2CP-C).